A 310-amino-acid polypeptide reads, in one-letter code: Probable cell division protein WhiA (310 aa).

Positions 274–308 (SLKELGTLVPGGPISKSGINHRLRKINQFAEQLQK) form a DNA-binding region, H-T-H motif.

Belongs to the WhiA family.

Functionally, involved in cell division and chromosome segregation. The protein is Probable cell division protein WhiA of Lactiplantibacillus plantarum (strain ATCC BAA-793 / NCIMB 8826 / WCFS1) (Lactobacillus plantarum).